The following is a 79-amino-acid chain: Sulfur carrier protein TusA (79 aa).

Cysteine 17 serves as the catalytic Cysteine persulfide intermediate.

Belongs to the sulfur carrier protein TusA family.

It localises to the cytoplasm. Its function is as follows. Sulfur carrier protein which probably makes part of a sulfur-relay system. This Pseudoalteromonas translucida (strain TAC 125) protein is Sulfur carrier protein TusA.